The primary structure comprises 446 residues: Putrescine N-hydroxylase (446 aa).

6 residues coordinate FAD: Phe17, Asp37, Ser38, Lys39, Trp44, and His45. Residues Thr54, Gln56, and Arg98 each coordinate NADP(+). Gln56 is an FAD binding site. Val121 is a binding site for FAD. 4 residues coordinate NADP(+): Ser199, Lys223, Tyr267, and Leu301. Residues Asn378, Pro389, and Leu391 each contribute to the FAD site.

This sequence belongs to the lysine N(6)-hydroxylase/L-ornithine N(5)-oxygenase family. In terms of assembly, homotetramer. FAD is required as a cofactor.

It catalyses the reaction putrescine + NADPH + O2 = N-hydroxyputrescine + NADP(+) + H2O. Its pathway is siderophore biosynthesis. Functionally, N-hydroxylating monooxygenase involved in the biosynthesis of fimsbactin A, the major siderophore produced by A.baumannii. Catalyzes the N-hydroxylation of the aliphatic diamine putrescine into N-hydroxyputrescine (NHP). Putrescine is the preferred substrate, but the enzyme can also catalyze the N-hydroxylation of cadaverine, with 4-fold lower catalytic efficiency. Cannot use lysine or ornithine as substrates. Uses both NADPH and NADH as the reducing cofactor with a preference for NADPH. The chain is Putrescine N-hydroxylase from Acinetobacter baumannii (strain ATCC 17978 / DSM 105126 / CIP 53.77 / LMG 1025 / NCDC KC755 / 5377).